Reading from the N-terminus, the 106-residue chain is UPF0145 protein NE1032 (106 aa).

This sequence belongs to the UPF0145 family.

This is UPF0145 protein NE1032 from Nitrosomonas europaea (strain ATCC 19718 / CIP 103999 / KCTC 2705 / NBRC 14298).